Reading from the N-terminus, the 238-residue chain is RNA pyrophosphohydrolase (238 aa).

A Nudix hydrolase domain is found at 6–149 (GFRPNVGIIL…KREVYQMALS (144 aa)). The short motif at 38–59 (GGIKYGETPEQAMYRELHEEVG) is the Nudix box element. The disordered stretch occupies residues 161 to 238 (APLSPYGRGG…PDDTPSKDSL (78 aa)). The span at 171 to 181 (PHRERDGRDNR) shows a compositional bias: basic and acidic residues. Residues 188–199 (RNDQNTRGQRQP) show a composition bias toward polar residues. The segment covering 204 to 217 (VTTSTVIVETVITS) has biased composition (low complexity).

The protein belongs to the Nudix hydrolase family. RppH subfamily. Requires a divalent metal cation as cofactor.

In terms of biological role, accelerates the degradation of transcripts by removing pyrophosphate from the 5'-end of triphosphorylated RNA, leading to a more labile monophosphorylated state that can stimulate subsequent ribonuclease cleavage. The sequence is that of RNA pyrophosphohydrolase from Ralstonia nicotianae (strain ATCC BAA-1114 / GMI1000) (Ralstonia solanacearum).